The following is a 212-amino-acid chain: Adenylate kinase (212 aa).

14-19 (GSGKGT) contributes to the ATP binding site. The tract at residues 34–63 (STGDLFRKKISEDSRFAAQIQNYLSSGSYV) is NMP. Residues Thr35, Arg40, 61 to 63 (SYV), 89 to 92 (GYPR), and Gln96 each bind AMP. The segment at 126–163 (QRLFCQKCQKSYNLLLAKPKNGLKCDLDNTDLITRNDD) is LID. Residue Arg127 participates in ATP binding. The Zn(2+) site is built by Cys130 and Cys133. 136–137 (SY) provides a ligand contact to ATP. Zn(2+) is bound by residues Cys150 and Asp153. Residues Arg160 and Arg171 each contribute to the AMP site. Residue Gln199 participates in ATP binding.

Belongs to the adenylate kinase family. In terms of assembly, monomer.

It is found in the cytoplasm. The enzyme catalyses AMP + ATP = 2 ADP. Its pathway is purine metabolism; AMP biosynthesis via salvage pathway; AMP from ADP: step 1/1. Functionally, catalyzes the reversible transfer of the terminal phosphate group between ATP and AMP. Plays an important role in cellular energy homeostasis and in adenine nucleotide metabolism. The protein is Adenylate kinase of Mesomycoplasma hyopneumoniae (strain 232) (Mycoplasma hyopneumoniae).